A 197-amino-acid chain; its full sequence is Probable GTP-binding protein EngB (197 aa).

Residues 22–195 (GYPEIALVGR…WNWIEAQAFG (174 aa)) form the EngB-type G domain. Residues 30–37 (GRSNVGKS), 57–61 (GKTQT), 75–78 (DVPG), 142–145 (TKSD), and 174–176 (FSA) each bind GTP. The Mg(2+) site is built by Ser37 and Thr59.

The protein belongs to the TRAFAC class TrmE-Era-EngA-EngB-Septin-like GTPase superfamily. EngB GTPase family. It depends on Mg(2+) as a cofactor.

Functionally, necessary for normal cell division and for the maintenance of normal septation. This chain is Probable GTP-binding protein EngB, found in Levilactobacillus brevis (strain ATCC 367 / BCRC 12310 / CIP 105137 / JCM 1170 / LMG 11437 / NCIMB 947 / NCTC 947) (Lactobacillus brevis).